The sequence spans 823 residues: Protein ROOT HAIR DEFECTIVE 3 homolog 2 (823 aa).

Residues 1–688 (MEVPISGGGG…EAHRRSNNWL (688 aa)) are Cytoplasmic-facing. Residues 45–260 (GLSYAVVSIV…IAPGGLAADR (216 aa)) form the GB1/RHD3-type G domain. 55-62 (GPQGSGKS) is a binding site for GTP. Residues 226–246 (LSSYEEKENLFKEQVGQLRQR) are a coiled coil. The helical transmembrane segment at 689–709 (PPAWTVLLLAILGYNEFIFLL) threads the bilayer. At 710 to 712 (RNP) the chain is on the lumenal side. Residues 713-733 (LYLLGLFVAFVVSYAAWLQYD) traverse the membrane as a helical segment. Topologically, residues 734–823 (ITAYFRHGTL…SVGSNSDDES (90 aa)) are cytoplasmic. Residues 770 to 823 (NQKSSSHPPRHRPPLHPQSFRNQAQQQSQAQVQYQAPSSLSSSSSVGSNSDDES) are disordered. A compositionally biased stretch (low complexity) spans 786-823 (PQSFRNQAQQQSQAQVQYQAPSSLSSSSSVGSNSDDES).

It belongs to the TRAFAC class dynamin-like GTPase superfamily. GB1/RHD3 GTPase family. RHD3 subfamily.

It is found in the endoplasmic reticulum membrane. Probable GTP-binding protein that may be involved in cell development. The protein is Protein ROOT HAIR DEFECTIVE 3 homolog 2 of Oryza sativa subsp. japonica (Rice).